A 226-amino-acid polypeptide reads, in one-letter code: MMPMNQEFIQKLRFNEKGLIPAIAQDWLDGAILMMAWMNKESLEKTLITGEVHYWSRSREKLWHKGETSGHFQILKGIRFDCDSDVMLLSIEQVGSIACHTGARSCFFQEVEENIPDLEQNSTFNRPLSNTCSELFEVIKDRSSNPQKNSYTNSLLKDGDNKILKKIGEEGSEFVMACKDNDHESISNEAADLIFHIQVALKYHKVEWRDVLEVLAKRRQSKSNPK.

The tract at residues 1–131 (MMPMNQEFIQ…STFNRPLSNT (131 aa)) is phosphoribosyl-AMP cyclohydrolase. Positions 132–226 (CSELFEVIKD…KRRQSKSNPK (95 aa)) are phosphoribosyl-ATP pyrophosphohydrolase.

It in the N-terminal section; belongs to the PRA-CH family. In the C-terminal section; belongs to the PRA-PH family.

Its subcellular location is the cytoplasm. It catalyses the reaction 1-(5-phospho-beta-D-ribosyl)-ATP + H2O = 1-(5-phospho-beta-D-ribosyl)-5'-AMP + diphosphate + H(+). It carries out the reaction 1-(5-phospho-beta-D-ribosyl)-5'-AMP + H2O = 1-(5-phospho-beta-D-ribosyl)-5-[(5-phospho-beta-D-ribosylamino)methylideneamino]imidazole-4-carboxamide. The protein operates within amino-acid biosynthesis; L-histidine biosynthesis; L-histidine from 5-phospho-alpha-D-ribose 1-diphosphate: step 2/9. Its pathway is amino-acid biosynthesis; L-histidine biosynthesis; L-histidine from 5-phospho-alpha-D-ribose 1-diphosphate: step 3/9. The protein is Histidine biosynthesis bifunctional protein HisIE of Prochlorococcus marinus (strain SARG / CCMP1375 / SS120).